Here is a 589-residue protein sequence, read N- to C-terminus: MSVTVHENRKSRTSTGSMNISLYHKLSHSDCVLNHLNTMRKQRLFTDVTLWAGNRSFPCHRAVLAACSQYFEAMFSNGLRESLDNTVNFHDSLHPEVLELLLDFAYSSKIIINEENAESLLEAGDMLQFHDIRDAACEFLEKNLYPSNCLGMMILSDAHQCQRLYELSLRTCLSNFATLHNTEDFCSLSKDMVLDLISSDELEIEDEQVVFNSVLHWVKEDLDKRKDYFPELLRKVRLALLPSELLKEAVVCEDLIIADERSKLIMDEAVVCKKKILQNDGVVTSLCAKPRKAGHTLLILGGQTFMCDKIYQVDHKAKEIIPKADLPSPRKEFSACAIGCKVYVTGGRGSENGVSKDVWVYDTINEEWSKSAPMLIARFGHGSAELENCLYVVGGHTAVAGVFPASPSVSLKQVEKYDPLTNKWTMMAPLRDGVSNAAVVSAKLKLFAFGGTSIHRDRVSKVQCYDPDENRWSIKAECPQPWRYTAAAVLGSQIFIMGGDTEFTAASAYRFDCETNQWTRIGDMTAKRMSCHALASGNKVYVVGGYFGTQRCKTLDCYDPTSDSWNSITSVPYSLIPTAFVSTWKHLPA.

A BTB domain is found at 46–114 (TDVTLWAGNR…AYSSKIIINE (69 aa)). Residues 149–250 (CLGMMILSDA…LPSELLKEAV (102 aa)) enclose the BACK domain. Kelch repeat units lie at residues 296 to 340 (TLLI…AIGC), 341 to 388 (KVYV…ELEN), 389 to 444 (CLYV…SAKL), 446 to 492 (LFAF…VLGS), 493 to 538 (QIFI…ASGN), and 539 to 585 (KVYV…STWK).

Component of the BCR(KLHL25) E3 ubiquitin ligase complex, at least composed of cul3, klhl25 and rbx1.

Its pathway is protein modification; protein ubiquitination. In terms of biological role, substrate-specific adapter of a BCR (BTB-CUL3-RBX1) E3 ubiquitin ligase complex involved in various processes, such as translation homeostasis and lipid synthesis. The BCR(KLHL25) ubiquitin ligase complex acts by mediating ubiquitination of hypophosphorylated eif4ebp1 (4E-BP1): ubiquitination and subsequent degradation of hypophosphorylated EIF4EBP1 (4E-BP1) probably serves as a homeostatic mechanism to maintain translation and prevent eIF4E inhibition when eIF4E levels are low. The BCR(KLHL25) complex also acts as a regulator of lipid synthesis by mediating ubiquitination and degradation of ACLY, thereby inhibiting lipid synthesis. The chain is Kelch-like protein 25 from Xenopus tropicalis (Western clawed frog).